The chain runs to 626 residues: Phosphoenolpyruvate carboxykinase (ATP) 2 (626 aa).

Disordered stretches follow at residues 1-23 (MASPNGGVTTYDYHDSDSAAPVN) and 64-86 (PNLVKGDPEATKGAPPVPIKHQQ). ATP is bound at residue 324–331 (GLSGTGKT).

It belongs to the phosphoenolpyruvate carboxykinase (ATP) family. Homohexamer.

The protein localises to the cytoplasm. The catalysed reaction is oxaloacetate + ATP = phosphoenolpyruvate + ADP + CO2. The protein operates within carbohydrate biosynthesis; gluconeogenesis. In Urochloa panicoides (Panic liverseed grass), this protein is Phosphoenolpyruvate carboxykinase (ATP) 2 (PCK2).